Reading from the N-terminus, the 1003-residue chain is Retinoblastoma-related protein 1 (1003 aa).

A domain A region spans residues 405 to 607 (TPVSTAMTTA…EKGSSMYNSL (203 aa)). The segment at 405–860 (TPVSTAMTTA…NEMFIPSVKP (456 aa)) is pocket. The interval 608 to 729 (AVAKPSLAAE…PGGGGETCAE (122 aa)) is spacer. Residues 730 to 860 (TAINVFFGKI…NEMFIPSVKP (131 aa)) are domain B. A disordered region spans residues 868-899 (AGNNSEKNDHNDGQGPASPKPSPFPKLPDMSP).

It belongs to the retinoblastoma protein (RB) family. Expressed in roots, stems, leaves and flowers.

The protein resides in the nucleus. Regulator of biological processes that recruits a histone deacetylase to control gene transcription. Formation of stable complexes with geminiviridae replication-associated proteins may create a cellular environment which favors viral DNA replication. May play a role in the entry into mitosis, negatively regulating the cell proliferation during leaf, stem, and flower development. Critical regulator of the endocycle. This Nicotiana benthamiana protein is Retinoblastoma-related protein 1 (RBR1).